The following is a 217-amino-acid chain: Cytochrome b5 domain-containing protein 1 (217 aa).

One can recognise a Cytochrome b5 heme-binding domain in the interval 6–72 (PRFYTPREVS…NPKTGDVKTH (67 aa)). 2 residues coordinate heme: H41 and H72.

The protein belongs to the cytochrome b5 family.

The protein resides in the cytoplasm. Its subcellular location is the cytoskeleton. It is found in the cilium axoneme. Its function is as follows. Radial spoke stalk protein that binds heme under oxidizing conditions. Required for the coordinated beating of multiple cilia maybe by functioning in a redox signaling pathway. In Xenopus tropicalis (Western clawed frog), this protein is Cytochrome b5 domain-containing protein 1 (cyb5d1).